The following is a 543-amino-acid chain: Chaperonin GroEL (543 aa).

Residues 29-32 (TLGP), 86-90 (DGTTT), glycine 413, 476-478 (NAA), and aspartate 492 each bind ATP.

Belongs to the chaperonin (HSP60) family. Forms a cylinder of 14 subunits composed of two heptameric rings stacked back-to-back. Interacts with the co-chaperonin GroES.

Its subcellular location is the cytoplasm. The enzyme catalyses ATP + H2O + a folded polypeptide = ADP + phosphate + an unfolded polypeptide.. Together with its co-chaperonin GroES, plays an essential role in assisting protein folding. The GroEL-GroES system forms a nano-cage that allows encapsulation of the non-native substrate proteins and provides a physical environment optimized to promote and accelerate protein folding. This is Chaperonin GroEL from Streptococcus pyogenes serotype M5 (strain Manfredo).